The primary structure comprises 218 residues: 7-cyano-7-deazaguanine synthase (218 aa).

11 to 21 (LSGGMDSATLL) contributes to the ATP binding site. Zn(2+) is bound by residues C193, C201, C204, and C207.

This sequence belongs to the QueC family. It depends on Zn(2+) as a cofactor.

It catalyses the reaction 7-carboxy-7-deazaguanine + NH4(+) + ATP = 7-cyano-7-deazaguanine + ADP + phosphate + H2O + H(+). It functions in the pathway purine metabolism; 7-cyano-7-deazaguanine biosynthesis. In terms of biological role, catalyzes the ATP-dependent conversion of 7-carboxy-7-deazaguanine (CDG) to 7-cyano-7-deazaguanine (preQ(0)). The polypeptide is 7-cyano-7-deazaguanine synthase (Aquifex aeolicus (strain VF5)).